The following is a 272-amino-acid chain: Undecaprenyl-diphosphatase (272 aa).

A run of 8 helical transmembrane segments spans residues 6–26 (SLLVAAILGIVEGLTEFLPVS), 45–65 (AKTFEVVIQLGSILAVVVMFW), 89–109 (LSLIHILLGMVPAVVLGLVFH), 115–135 (LFNPINVMYALVVGGVLLIIA), 156–176 (AFFIGCFQCLALWPGFSRSGA), 189–209 (YAASEFSFLLAVPMMMGATAL), 221–241 (ADLPMFAVGFVTAFVVALVAI), and 251–271 (ISFIPFAIYRFIVAAAVFAVF).

This sequence belongs to the UppP family.

It is found in the cell inner membrane. The enzyme catalyses di-trans,octa-cis-undecaprenyl diphosphate + H2O = di-trans,octa-cis-undecaprenyl phosphate + phosphate + H(+). Its function is as follows. Catalyzes the dephosphorylation of undecaprenyl diphosphate (UPP). Confers resistance to bacitracin. The polypeptide is Undecaprenyl-diphosphatase (Cronobacter sakazakii (strain ATCC BAA-894) (Enterobacter sakazakii)).